We begin with the raw amino-acid sequence, 395 residues long: Tryptophan synthase beta chain (395 aa).

An N6-(pyridoxal phosphate)lysine modification is found at lysine 86.

It belongs to the TrpB family. In terms of assembly, tetramer of two alpha and two beta chains. Pyridoxal 5'-phosphate is required as a cofactor.

The catalysed reaction is (1S,2R)-1-C-(indol-3-yl)glycerol 3-phosphate + L-serine = D-glyceraldehyde 3-phosphate + L-tryptophan + H2O. The protein operates within amino-acid biosynthesis; L-tryptophan biosynthesis; L-tryptophan from chorismate: step 5/5. The beta subunit is responsible for the synthesis of L-tryptophan from indole and L-serine. The protein is Tryptophan synthase beta chain of Pseudoalteromonas atlantica (strain T6c / ATCC BAA-1087).